We begin with the raw amino-acid sequence, 127 residues long: Cold-regulated protein 1 (127 aa).

Positions 39–127 are disordered; it reads ARGPPPSPAP…WTRPRMARAR (89 aa). Positions 85–101 are enriched in basic residues; it reads SRRRRRRRATRRARSRM. Residues 102–121 are compositionally biased toward low complexity; that stretch reads PRTTPWRAPRAPARAWWTRP.

The sequence is that of Cold-regulated protein 1 from Hordeum vulgare (Barley).